Consider the following 307-residue polypeptide: Oxygen-dependent coproporphyrinogen-III oxidase (307 aa).

Substrate is bound at residue S99. Residues H103 and H113 each contribute to the a divalent metal cation site. The Proton donor role is filled by H113. A substrate-binding site is contributed by 115-117 (NVR). A divalent metal cation contacts are provided by H152 and H182. An important for dimerization region spans residues 247 to 282 (YVEFNLVFDRGTLFGLQSGGRTESILMSMPPVANWR). 265–267 (GGR) is a substrate binding site.

Belongs to the aerobic coproporphyrinogen-III oxidase family. As to quaternary structure, homodimer. A divalent metal cation serves as cofactor.

The protein resides in the cytoplasm. The catalysed reaction is coproporphyrinogen III + O2 + 2 H(+) = protoporphyrinogen IX + 2 CO2 + 2 H2O. The protein operates within porphyrin-containing compound metabolism; protoporphyrin-IX biosynthesis; protoporphyrinogen-IX from coproporphyrinogen-III (O2 route): step 1/1. Its function is as follows. Involved in the heme biosynthesis. Catalyzes the aerobic oxidative decarboxylation of propionate groups of rings A and B of coproporphyrinogen-III to yield the vinyl groups in protoporphyrinogen-IX. The polypeptide is Oxygen-dependent coproporphyrinogen-III oxidase (Burkholderia orbicola (strain MC0-3)).